The chain runs to 255 residues: ATP synthase subunit a 2 (255 aa).

A run of 5 helical transmembrane segments spans residues 24 to 44, 86 to 106, 131 to 151, 205 to 225, and 226 to 246; these read WFGINLDSMIMVWLTGLVFIL, LIGPLALTIFVWVLLMNAVDL, DINITMSMALGVFILVLGYTF, MIFILIALMPWWMQWALSVPW, and ALFHILIVVLQAFIFMVLTVV.

It belongs to the ATPase A chain family. As to quaternary structure, F-type ATPases have 2 components, CF(1) - the catalytic core - and CF(0) - the membrane proton channel. CF(1) has five subunits: alpha(3), beta(3), gamma(1), delta(1), epsilon(1). CF(0) has three main subunits: a(1), b(2) and c(9-12). The alpha and beta chains form an alternating ring which encloses part of the gamma chain. CF(1) is attached to CF(0) by a central stalk formed by the gamma and epsilon chains, while a peripheral stalk is formed by the delta and b chains.

It localises to the cell inner membrane. In terms of biological role, key component of the proton channel; it plays a direct role in the translocation of protons across the membrane. The sequence is that of ATP synthase subunit a 2 from Vibrio campbellii (strain ATCC BAA-1116).